The primary structure comprises 199 residues: IMP cyclohydrolase (199 aa).

Belongs to the archaeal IMP cyclohydrolase family.

It carries out the reaction IMP + H2O = 5-formamido-1-(5-phospho-D-ribosyl)imidazole-4-carboxamide. It functions in the pathway purine metabolism; IMP biosynthesis via de novo pathway; IMP from 5-formamido-1-(5-phospho-D-ribosyl)imidazole-4-carboxamide: step 1/1. Functionally, catalyzes the cyclization of 5-formylamidoimidazole-4-carboxamide ribonucleotide to IMP. The sequence is that of IMP cyclohydrolase from Methanothrix thermoacetophila (strain DSM 6194 / JCM 14653 / NBRC 101360 / PT) (Methanosaeta thermophila).